A 315-amino-acid polypeptide reads, in one-letter code: uncharacterized protein (315 aa).

3 helical membrane-spanning segments follow: residues 18–38, 202–222, and 244–264; these read IWFI…IISG, ILAI…LAGI, and LIYA…VIVL. A disordered region spans residues 288 to 315; sequence VCSTGNRSSGSTDQDISTTKQQSQEAVA.

Its subcellular location is the membrane. This is an uncharacterized protein from Saccharomyces cerevisiae (strain ATCC 204508 / S288c) (Baker's yeast).